A 944-amino-acid polypeptide reads, in one-letter code: Serine/threonine-protein kinase PLK4 (944 aa).

A Protein kinase domain is found at Phe-12 to Met-265. Residues Leu-18–Val-26 and Lys-41 each bind ATP. Asp-136 acts as the Proton acceptor in catalysis. Disordered stretches follow at residues Lys-327–Arg-396, Arg-432–Asp-463, and Leu-530–Phe-561. The span at Arg-378 to Ser-394 shows a compositional bias: polar residues. The span at Arg-432–Pro-447 shows a compositional bias: basic and acidic residues. Positions Phe-548–Phe-561 are enriched in polar residues. The region spanning Thr-565 to Lys-678 is the Cryptic POLO box 1 (CPB1) domain. A Cryptic POLO box 2 (CPB2) domain is found at Thr-679 to Pro-791. Residues Ala-786 to Gln-809 are disordered. The 79-residue stretch at Gln-862 to Ser-940 folds into the POLO box domain.

This sequence belongs to the protein kinase superfamily. Ser/Thr protein kinase family. CDC5/Polo subfamily. Homodimer. In terms of processing, ubiquitinated; leading to its degradation by the proteasome.

Its subcellular location is the cytoplasm. It is found in the cytoskeleton. The protein localises to the microtubule organizing center. It localises to the centrosome. The protein resides in the centriole. The catalysed reaction is L-seryl-[protein] + ATP = O-phospho-L-seryl-[protein] + ADP + H(+). The enzyme catalyses L-threonyl-[protein] + ATP = O-phospho-L-threonyl-[protein] + ADP + H(+). In terms of biological role, serine/threonine-protein kinase that plays a central role in centriole duplication. Able to trigger procentriole formation on the surface of the parental centriole cylinder, leading to the recruitment of centriole biogenesis proteins such as sass6, cpap, ccp110, cep135 and gamma-tubulin. When overexpressed, it is able to induce centrosome amplification through the simultaneous generation of multiple procentrioles adjoining each parental centriole during S phase. Its central role in centriole replication suggests a possible role in tumorigenesis, centrosome aberrations being frequently observed in tumors. Also involved in deuterosome-mediated centriole amplification in multiciliated that can generate more than 100 centrioles. In Xenopus laevis (African clawed frog), this protein is Serine/threonine-protein kinase PLK4.